The following is a 126-amino-acid chain: Ribosome-binding factor A (126 aa).

Belongs to the RbfA family. Monomer. Binds 30S ribosomal subunits, but not 50S ribosomal subunits or 70S ribosomes.

The protein resides in the cytoplasm. Its function is as follows. One of several proteins that assist in the late maturation steps of the functional core of the 30S ribosomal subunit. Associates with free 30S ribosomal subunits (but not with 30S subunits that are part of 70S ribosomes or polysomes). Required for efficient processing of 16S rRNA. May interact with the 5'-terminal helix region of 16S rRNA. In Haemophilus ducreyi (strain 35000HP / ATCC 700724), this protein is Ribosome-binding factor A.